A 554-amino-acid polypeptide reads, in one-letter code: MESQTTFKYESLAFTKLSHCQWTDYFLSVPIDESELDVITREIDILKPEVMELLSSQGDDETSKRKVLLIQLLLSLGLAFHFENEIKNILEHAFRKIDDITGDEKDLSTISIMFRVFRTYGHNLPSSVFKRFTGDDGKFQQSLTEDAKGILSLYEAAHLGTTTDYILDEALKFTSSHLKSLLAGGTCRPHILRLIRNTLYLPQRWNMEAVIAREYISFYEQEEDHDKMLLRLAKLNFKLLQLHYIKELKSFIKWWMELGLTSKWPSQFRERIVEAWLAGLMMYFEPQFSGGRVIAAKFNYLLTILDDACDHYFSIHELTRLVACVERWSPDGIDTLEDISRSVFKLMLDVFDDIGKGVRSEGSSYHLKEMLEELNTLVRANLDLVKWARGIQVPSFEEHVEVGGIALTSYATLMYSFVGMGETAGKEAYEWVRSRPRLIKSLAAKGRLMDDITDFDSDMSNGFAANAINYYMKQFVVTKEEAILECQRMIVDINKTINEELLKTTSVPGRVLKQALNFGRLLELLYTKSDDIYNCSEGKLKEYIVTLLIDPIRL.

Mg(2+)-binding residues include aspartate 306, aspartate 310, aspartate 450, and aspartate 458. A DDXXD motif motif is present at residues 306–310; sequence DDACD.

The protein belongs to the terpene synthase family. Tpsa subfamily. It depends on Mg(2+) as a cofactor. Mn(2+) serves as cofactor. Predominantly expressed in roots. Expressed in the cortex and the sub-epidermal layers of roots. Also detected in leaf hydathodes and flower stigmata.

The protein localises to the cytoplasm. The catalysed reaction is (2E,6E)-farnesyl diphosphate = (Z)-gamma-bisabolene + diphosphate. It functions in the pathway secondary metabolite biosynthesis; terpenoid biosynthesis. Its function is as follows. Involved in sesquiterpene (C15) biosynthesis. The major product is (Z)-gamma-bisabolene with minor amounts of (E)-nerolidol and alpha-bisabolol. The chain is (Z)-gamma-bisabolene synthase 1 (TPS12) from Arabidopsis thaliana (Mouse-ear cress).